Consider the following 362-residue polypeptide: MANPVPSACCVVLAAVVVVYAQRHSQQDSHIQYERVGADVTMKCGSMDWDAAVTWTANGTDIDDSHLNGSYLILKNVDLTQSGQYSCYEGSSWHLKYQTYLRVGVPPKEPVLMCRSNNYPKGFYCSWHLPSPTYIPNSFNISVIHGTREMVCEKDIFPKNRCHIRYLQLFSTVKYKVTLTVTNALGKNSTTLTFDEFAIVKPDPPESVVAKPVPNNPRRLEVSWQNPSSWPDPESFPLKFFLRYRPLILDQWQHVELSDGTSHTITDAYAGKEYIIQVAAKDNDIGTWSDWSVAVHATPWTEEPKHLTTEVQITETTSTSTSSFMPPPTTKICDKGAGVGSGAVAVCWTAGLVLAAYGVLFI.

A signal peptide spans 1–19; it reads MANPVPSACCVVLAAVVVV. The 81-residue stretch at 23–103 folds into the Ig-like C2-type domain; sequence RHSQQDSHIQ…HLKYQTYLRV (81 aa). An intrachain disulfide couples Cys-44 to Cys-87. 4 N-linked (GlcNAc...) asparagine glycosylation sites follow: Asn-58, Asn-68, Asn-140, and Asn-188. Fibronectin type-III domains follow at residues 106–203 and 204–304; these read PPKE…VKPD and PPES…TEEP. A WSXWS motif motif is present at residues 288–292; that stretch reads WSDWS. Asp-334 carries GPI-anchor amidated aspartate lipidation. The propeptide at 335-362 is removed in mature form; it reads KGAGVGSGAVAVCWTAGLVLAAYGVLFI.

This sequence belongs to the type I cytokine receptor family. Type 3 subfamily. In terms of assembly, heterotrimer of the alpha subunit, LIFR and IL6ST. As to expression, highly expressed in nervous system. Also found in skeletal muscle.

Its subcellular location is the cell membrane. Functionally, binds to CNTF (GPA). The alpha subunit provides the receptor specificity. The chain is Ciliary neurotrophic factor receptor subunit alpha (CNTFR) from Gallus gallus (Chicken).